The following is a 431-amino-acid chain: V-type ATP synthase beta chain (431 aa).

Belongs to the ATPase alpha/beta chains family.

Its function is as follows. Produces ATP from ADP in the presence of a proton gradient across the membrane. The V-type beta chain is a regulatory subunit. This chain is V-type ATP synthase beta chain, found in Treponema denticola (strain ATCC 35405 / DSM 14222 / CIP 103919 / JCM 8153 / KCTC 15104).